We begin with the raw amino-acid sequence, 667 residues long: Acetoacetyl-CoA synthetase (667 aa).

This sequence belongs to the ATP-dependent AMP-binding enzyme family.

The protein resides in the cytoplasm. The protein localises to the cytosol. It carries out the reaction acetoacetate + ATP + CoA = acetoacetyl-CoA + AMP + diphosphate. Converts acetoacetate to acetoacetyl-CoA in the cytosol. Ketone body-utilizing enzyme, responsible for the synthesis of cholesterol and fatty acids. The chain is Acetoacetyl-CoA synthetase (AACS) from Gallus gallus (Chicken).